The primary structure comprises 100 residues: Small ribosomal subunit protein uS14c (100 aa).

This sequence belongs to the universal ribosomal protein uS14 family. As to quaternary structure, part of the 30S ribosomal subunit.

Its subcellular location is the plastid. The protein resides in the chloroplast. Binds 16S rRNA, required for the assembly of 30S particles. This chain is Small ribosomal subunit protein uS14c, found in Chlamydomonas reinhardtii (Chlamydomonas smithii).